A 225-amino-acid chain; its full sequence is Probable glutathione S-transferase (225 aa).

The GST N-terminal domain maps to 6–85; sequence EDVKLLGIVG…YIDETWKNNP (80 aa). Glutathione contacts are provided by residues serine 16, lysine 43, valine 57, and 69–70; that span reads ES. Residues 90–214 enclose the GST C-terminal domain; it reads DPYQRALARF…PPRDPLFAYF (125 aa).

This sequence belongs to the GST superfamily. HSP26 family.

The enzyme catalyses RX + glutathione = an S-substituted glutathione + a halide anion + H(+). Functionally, may play a role in the cellular response to stress. The polypeptide is Probable glutathione S-transferase (HSP26-A) (Glycine max (Soybean)).